The following is a 249-amino-acid chain: 2,3-bisphosphoglycerate-dependent phosphoglycerate mutase (249 aa).

Substrate contacts are provided by residues 9-16 (RHGQSQWN), 22-23 (TG), arginine 61, 88-91 (ERHY), lysine 99, 115-116 (RR), and 184-185 (GN). Catalysis depends on histidine 10, which acts as the Tele-phosphohistidine intermediate. Glutamate 88 (proton donor/acceptor) is an active-site residue.

The protein belongs to the phosphoglycerate mutase family. BPG-dependent PGAM subfamily. As to quaternary structure, homodimer.

The enzyme catalyses (2R)-2-phosphoglycerate = (2R)-3-phosphoglycerate. It functions in the pathway carbohydrate degradation; glycolysis; pyruvate from D-glyceraldehyde 3-phosphate: step 3/5. Catalyzes the interconversion of 2-phosphoglycerate and 3-phosphoglycerate. This chain is 2,3-bisphosphoglycerate-dependent phosphoglycerate mutase, found in Xanthomonas campestris pv. campestris (strain B100).